We begin with the raw amino-acid sequence, 363 residues long: Alanine racemase (363 aa).

Lys39 acts as the Proton acceptor; specific for D-alanine in catalysis. Lys39 carries the post-translational modification N6-(pyridoxal phosphate)lysine. Arg134 lines the substrate pocket. The active-site Proton acceptor; specific for L-alanine is Tyr251. Met299 lines the substrate pocket.

The protein belongs to the alanine racemase family. The cofactor is pyridoxal 5'-phosphate.

The catalysed reaction is L-alanine = D-alanine. It functions in the pathway amino-acid biosynthesis; D-alanine biosynthesis; D-alanine from L-alanine: step 1/1. In terms of biological role, catalyzes the interconversion of L-alanine and D-alanine. May also act on other amino acids. The protein is Alanine racemase (alr) of Thermodesulfovibrio yellowstonii (strain ATCC 51303 / DSM 11347 / YP87).